Here is a 152-residue protein sequence, read N- to C-terminus: Transcriptional regulator MraZ (152 aa).

2 consecutive SpoVT-AbrB domains span residues 5–52 (ATLV…PLPE) and 81–124 (ASEC…DETT).

Belongs to the MraZ family. As to quaternary structure, forms oligomers.

It localises to the cytoplasm. Its subcellular location is the nucleoid. Negatively regulates its own expression and that of the subsequent genes in the proximal part of the division and cell wall (dcw) gene cluster. Acts by binding directly to DNA. May also regulate the expression of genes outside the dcw cluster. This chain is Transcriptional regulator MraZ, found in Shigella flexneri serotype 5b (strain 8401).